A 320-amino-acid polypeptide reads, in one-letter code: Ribose-phosphate pyrophosphokinase (320 aa).

Residues 43-45 (DGE) and 102-103 (RQ) contribute to the ATP site. Mg(2+) is bound by residues His136 and Asp178. Residue Lys201 is part of the active site. D-ribose 5-phosphate contacts are provided by residues Arg203, Asp227, and 231-235 (DTAGT).

This sequence belongs to the ribose-phosphate pyrophosphokinase family. Class I subfamily. In terms of assembly, homohexamer. The cofactor is Mg(2+).

It is found in the cytoplasm. The catalysed reaction is D-ribose 5-phosphate + ATP = 5-phospho-alpha-D-ribose 1-diphosphate + AMP + H(+). The protein operates within metabolic intermediate biosynthesis; 5-phospho-alpha-D-ribose 1-diphosphate biosynthesis; 5-phospho-alpha-D-ribose 1-diphosphate from D-ribose 5-phosphate (route I): step 1/1. Involved in the biosynthesis of the central metabolite phospho-alpha-D-ribosyl-1-pyrophosphate (PRPP) via the transfer of pyrophosphoryl group from ATP to 1-hydroxyl of ribose-5-phosphate (Rib-5-P). The polypeptide is Ribose-phosphate pyrophosphokinase (Clostridium tetani (strain Massachusetts / E88)).